An 835-amino-acid chain; its full sequence is MKVLALRHSVAQVYADTQIYTHDETKDDYENAFLISNLTTHNILYLNYSVKTLQILNKSGIAAIEIQKNDELFTLIRCNFTYDYIDDIVYLHDYSYYTNNEIRTDQHWVTKTNIEDYLLPGWKLMYVGYNGNDTRGHYNFSFKCQNAATDDDAIIEYIYSNELDFQNFILKKIKERMTTSLPIARLSNRVFRDKLFKTLVSDHSRVVNVGPRNESMFTFLDHPSIKQFSNGPYLVKDTIKLKQERWLGKRLSQFDIGQYKNMLNVLTTLYQYYDMYHEKPIIYMVGSAPSYWIHDVKQYSDLKFETWDPLDTPYSDLHHKELFYASDVTKLKDNSILYVDIRTDRENADWKTWRKIVEEQTANNLNIAYKYLSTGKAKVCCVKMTAMDLELPISAKLLHHPTTEIRSEFYLIMDIWDSKNTKRFIPKGVLYSYINNTITENVFIQQPFKLRTLRNEYVVALYALSNDFNNREDVVKLVNNQKNALITVRINNTFKDEPKVGFKDIYDWTFLPTDFETNESIITSYDGCLGMFGLSISLASKPTGNNHLFILSGTNKYFKLDQFANHMSISRRSHQIRFSESATSYSGYIFRDLSNNNFNLIGTNVENSVSGHVYNALIYYRYNYSFDLKRWIYLHSTNKASIEGGRYYEHAPIELIYACRSAREFAKLQDDLTVLRYSNEIENYINKVYSITYADDPNYFIGIKFKNIPYEYDVKVPHLTFGVLNISDSMVPDVVAILKKFKNELFRMDVTTSYTYMLSDEIYVANVSGVLSTYFKLYNAFYKEQITFGQSRMFIPHITLSFSNKRVVRIGSTRLNIDFIYLRKIKGDTVFDMTE.

Residues Lys-171–Arg-245 form an N7-methyltransferase activity region. Positions Trp-246 to Gly-428 are 2'-O-methyltransferase activity. Residues Val-429 to Asn-555 are N7-methyltransferase activity. Positions Lys-556 to Thr-692 are GTase/RTPase activity. A 2'-5'-phosphodiesterase activity region spans residues Tyr-693 to Glu-835. Active-site for 2'-5'-phosphodiesterase activity residues include His-718, Thr-720, His-797, and Thr-799.

This sequence belongs to the rotavirus VP3 family. Interacts with VP1. Interacts with VP2.

It localises to the virion. The catalysed reaction is a 5'-end diphospho-ribonucleoside in mRNA + GTP + H(+) = a 5'-end (5'-triphosphoguanosine)-ribonucleoside in mRNA + diphosphate. It carries out the reaction a 5'-end (5'-triphosphoguanosine)-ribonucleoside in mRNA + S-adenosyl-L-methionine = a 5'-end (N(7)-methyl 5'-triphosphoguanosine)-ribonucleoside in mRNA + S-adenosyl-L-homocysteine. The enzyme catalyses 5'-triphosphoadenylyl-(2'-&gt;5')-adenylyl-(2'-&gt;5')-adenosine + 2 H2O = 2 AMP + ATP + 2 H(+). Multifunctional enzyme involved in mRNA capping. Catalyzes the formation of the 5' cap structure on the viral plus-strand transcripts. Specifically binds to GTP and displays guanylyltransferase and methyltransferase activities. Has affinity for ssRNA but not for dsRNA. Capping activity is non-specific and caps RNAs that initiate with either a G or an A residue. Together with VP1 polymerase, forms a VP1-VP3 complex positioned near the channels situated at each of the five-fold vertices of the core. Following infection, the outermost layer of the virus is lost, leaving a double-layered particle (DLP) made up of the core and VP6 shell. VP1 then catalyzes the transcription of fully conservative plus-strand genomic RNAs that are capped by VP3 and extruded through the DLP's channels into the cytoplasm where they function as mRNAs for translation of viral proteins. DLPs probably have an RNA triphosphatase activity as well, whereas open cores do not. In terms of biological role, counteracts the host innate immune response thanks to its phosphodiesterase that degrades the 5'-triphosphorylated, 2'-5' linked adenylate oligomers produced by the host cell IFN-inducible 2',5'-oligoadenylate synthetase (OAS). The host RNaseL is therefore not activated. The sequence is that of Protein VP3 from Rotavirus A (strain RVA/Cow/France/RF/1975/G6P6[1]) (RV-A).